Here is a 120-residue protein sequence, read N- to C-terminus: NAD(P)H-quinone oxidoreductase subunit 3, chloroplastic (120 aa).

Transmembrane regions (helical) follow at residues 2 to 22 (FLLYEYDIFWAFLIISSVIPI), 64 to 84 (MFALVFVVFDVETIFLYPWAL), and 88 to 108 (ILGVSVFIEALIFVLILVLGL).

Belongs to the complex I subunit 3 family. In terms of assembly, NDH is composed of at least 16 different subunits, 5 of which are encoded in the nucleus.

It localises to the plastid. The protein resides in the chloroplast thylakoid membrane. It catalyses the reaction a plastoquinone + NADH + (n+1) H(+)(in) = a plastoquinol + NAD(+) + n H(+)(out). The enzyme catalyses a plastoquinone + NADPH + (n+1) H(+)(in) = a plastoquinol + NADP(+) + n H(+)(out). Functionally, NDH shuttles electrons from NAD(P)H:plastoquinone, via FMN and iron-sulfur (Fe-S) centers, to quinones in the photosynthetic chain and possibly in a chloroplast respiratory chain. The immediate electron acceptor for the enzyme in this species is believed to be plastoquinone. Couples the redox reaction to proton translocation, and thus conserves the redox energy in a proton gradient. The sequence is that of NAD(P)H-quinone oxidoreductase subunit 3, chloroplastic from Oenothera argillicola (Appalachian evening primrose).